We begin with the raw amino-acid sequence, 237 residues long: Phosphoribosylaminoimidazole-succinocarboxamide synthase (237 aa).

This sequence belongs to the SAICAR synthetase family.

The catalysed reaction is 5-amino-1-(5-phospho-D-ribosyl)imidazole-4-carboxylate + L-aspartate + ATP = (2S)-2-[5-amino-1-(5-phospho-beta-D-ribosyl)imidazole-4-carboxamido]succinate + ADP + phosphate + 2 H(+). The protein operates within purine metabolism; IMP biosynthesis via de novo pathway; 5-amino-1-(5-phospho-D-ribosyl)imidazole-4-carboxamide from 5-amino-1-(5-phospho-D-ribosyl)imidazole-4-carboxylate: step 1/2. This Enterococcus faecalis (strain ATCC 700802 / V583) protein is Phosphoribosylaminoimidazole-succinocarboxamide synthase.